The sequence spans 440 residues: Xaa-Pro dipeptidase (440 aa).

The Mn(2+) site is built by Asp-244, Asp-255, His-335, Glu-380, and Glu-419.

The protein belongs to the peptidase M24B family. Bacterial-type prolidase subfamily. Mn(2+) serves as cofactor.

It catalyses the reaction Xaa-L-Pro dipeptide + H2O = an L-alpha-amino acid + L-proline. Splits dipeptides with a prolyl residue in the C-terminal position. The polypeptide is Xaa-Pro dipeptidase (Shewanella piezotolerans (strain WP3 / JCM 13877)).